Here is a 382-residue protein sequence, read N- to C-terminus: MDQQKVNLLNYNYSQLRELLIAWDEKPFRAQQLFQWIHQVGIRDFAQMTNLGKVLRNKLSQLACIDLPEIVACQKSADGTHKWLLKLECGNCIETVFIPEANRGTLCVSSQVGCALNCSFCSTAKQGFNRNLSTAEIIGQVWLAARELSDNNGTHDKKITNVVMMGMGEPLLNFDNVVSAMNIMMDDLAYGLSKRRVTLSTSGVLPEMERLREVSPVALAVSLHAPTDELRNELVPINKKYPLSQLISLCKRYFKDEPRRKVTFEYVMLKGVNDQPEHASQLIKLLHNVPAKVNLIPFNPFPLTQYQRSSRETIDAFRDKLMKHGINTITRKTRGDDIDAACGQLAGEVKDKTSRSQRWQKLHFMSKTDKSTELTISSEEIA.

The active-site Proton acceptor is the glutamate 94. A Radical SAM core domain is found at 100–336; it reads EANRGTLCVS…NTITRKTRGD (237 aa). The cysteines at positions 107 and 342 are disulfide-linked. Positions 114, 118, and 121 each coordinate [4Fe-4S] cluster. Residues 168 to 169, serine 200, 222 to 224, and asparagine 299 contribute to the S-adenosyl-L-methionine site; these read GE and SLH. The active-site S-methylcysteine intermediate is the cysteine 342.

This sequence belongs to the radical SAM superfamily. RlmN family. It depends on [4Fe-4S] cluster as a cofactor.

The protein localises to the cytoplasm. The catalysed reaction is adenosine(2503) in 23S rRNA + 2 reduced [2Fe-2S]-[ferredoxin] + 2 S-adenosyl-L-methionine = 2-methyladenosine(2503) in 23S rRNA + 5'-deoxyadenosine + L-methionine + 2 oxidized [2Fe-2S]-[ferredoxin] + S-adenosyl-L-homocysteine. The enzyme catalyses adenosine(37) in tRNA + 2 reduced [2Fe-2S]-[ferredoxin] + 2 S-adenosyl-L-methionine = 2-methyladenosine(37) in tRNA + 5'-deoxyadenosine + L-methionine + 2 oxidized [2Fe-2S]-[ferredoxin] + S-adenosyl-L-homocysteine. In terms of biological role, specifically methylates position 2 of adenine 2503 in 23S rRNA and position 2 of adenine 37 in tRNAs. m2A2503 modification seems to play a crucial role in the proofreading step occurring at the peptidyl transferase center and thus would serve to optimize ribosomal fidelity. The chain is Dual-specificity RNA methyltransferase RlmN from Legionella pneumophila subsp. pneumophila (strain Philadelphia 1 / ATCC 33152 / DSM 7513).